Reading from the N-terminus, the 117-residue chain is MNKKLLRARRALKLRKKLYLLGSVRLVVYRSLRHMYAQIVSEDNCNVLVAASTTEKLIASKLRVTGNKEAAAVVGQVIAERAFKKGIVHVSFDRSGFKYHGRVQILAEYARQFGLKF.

It belongs to the universal ribosomal protein uL18 family. Part of the 50S ribosomal subunit; part of the 5S rRNA/L5/L18/L25 subcomplex. Contacts the 5S and 23S rRNAs.

Functionally, this is one of the proteins that bind and probably mediate the attachment of the 5S RNA into the large ribosomal subunit, where it forms part of the central protuberance. This Blochmanniella floridana protein is Large ribosomal subunit protein uL18.